A 455-amino-acid polypeptide reads, in one-letter code: Bifunctional protein GlmU (455 aa).

The segment at 1-226 is pyrophosphorylase; the sequence is MIAVAILAAG…YQEILGINDR (226 aa). UDP-N-acetyl-alpha-D-glucosamine is bound by residues 7-10, K21, Q73, and 78-79; these read LAAG and GT. A Mg(2+)-binding site is contributed by D103. UDP-N-acetyl-alpha-D-glucosamine is bound by residues G140, E155, N170, and N224. N224 is a Mg(2+) binding site. Residues 227–247 form a linker region; it reads KQLATAYKILQDRIKDDWLVA. Residues 248 to 455 form an N-acetyltransferase region; it reads GVTIMDPDSI…RPISSKQTEK (208 aa). R329 and K347 together coordinate UDP-N-acetyl-alpha-D-glucosamine. Residue H359 is the Proton acceptor of the active site. The UDP-N-acetyl-alpha-D-glucosamine site is built by Y362 and N373. Acetyl-CoA-binding positions include A376, 382-383, A419, and R436; that span reads NY.

The protein in the N-terminal section; belongs to the N-acetylglucosamine-1-phosphate uridyltransferase family. In the C-terminal section; belongs to the transferase hexapeptide repeat family. As to quaternary structure, homotrimer. The cofactor is Mg(2+).

It localises to the cytoplasm. The enzyme catalyses alpha-D-glucosamine 1-phosphate + acetyl-CoA = N-acetyl-alpha-D-glucosamine 1-phosphate + CoA + H(+). It catalyses the reaction N-acetyl-alpha-D-glucosamine 1-phosphate + UTP + H(+) = UDP-N-acetyl-alpha-D-glucosamine + diphosphate. It functions in the pathway nucleotide-sugar biosynthesis; UDP-N-acetyl-alpha-D-glucosamine biosynthesis; N-acetyl-alpha-D-glucosamine 1-phosphate from alpha-D-glucosamine 6-phosphate (route II): step 2/2. The protein operates within nucleotide-sugar biosynthesis; UDP-N-acetyl-alpha-D-glucosamine biosynthesis; UDP-N-acetyl-alpha-D-glucosamine from N-acetyl-alpha-D-glucosamine 1-phosphate: step 1/1. Its pathway is bacterial outer membrane biogenesis; LPS lipid A biosynthesis. Functionally, catalyzes the last two sequential reactions in the de novo biosynthetic pathway for UDP-N-acetylglucosamine (UDP-GlcNAc). The C-terminal domain catalyzes the transfer of acetyl group from acetyl coenzyme A to glucosamine-1-phosphate (GlcN-1-P) to produce N-acetylglucosamine-1-phosphate (GlcNAc-1-P), which is converted into UDP-GlcNAc by the transfer of uridine 5-monophosphate (from uridine 5-triphosphate), a reaction catalyzed by the N-terminal domain. This chain is Bifunctional protein GlmU, found in Acaryochloris marina (strain MBIC 11017).